The primary structure comprises 323 residues: Ribose import permease protein RbsC (323 aa).

7 helical membrane-spanning segments follow: residues phenylalanine 21–valine 41, alanine 55–glycine 75, isoleucine 95–valine 115, valine 122–tyrosine 142, valine 167–isoleucine 187, isoleucine 217–threonine 237, and valine 273–leucine 293.

Belongs to the binding-protein-dependent transport system permease family. AraH/RbsC subfamily. In terms of assembly, the complex is composed of an ATP-binding protein (RbsA), two transmembrane proteins (RbsC) and a solute-binding protein (RbsB).

The protein resides in the cell inner membrane. In terms of biological role, part of the ABC transporter complex RbsABC involved in ribose import. Probably responsible for the translocation of the substrate across the membrane. The protein is Ribose import permease protein RbsC (rbsC) of Haemophilus influenzae (strain ATCC 51907 / DSM 11121 / KW20 / Rd).